Reading from the N-terminus, the 426-residue chain is Proline--tRNA ligase (426 aa).

This sequence belongs to the class-II aminoacyl-tRNA synthetase family. ProS type 2 subfamily. As to quaternary structure, homodimer.

Its subcellular location is the cytoplasm. It carries out the reaction tRNA(Pro) + L-proline + ATP = L-prolyl-tRNA(Pro) + AMP + diphosphate. Its function is as follows. Catalyzes the attachment of proline to tRNA(Pro) in a two-step reaction: proline is first activated by ATP to form Pro-AMP and then transferred to the acceptor end of tRNA(Pro). In Anaplasma phagocytophilum (strain HZ), this protein is Proline--tRNA ligase.